The chain runs to 2266 residues: Little elongation complex subunit 1 (2266 aa).

Residues 23-186 (CASLQQNLNE…KQKNEKELRH (164 aa)) are a coiled coil. Disordered stretches follow at residues 223 to 259 (GEGS…PLRT) and 517 to 540 (PAQE…KRPL). The span at 250–259 (PPTQGSPLRT) shows a compositional bias: polar residues. A phosphoserine mark is found at Ser255, Ser533, Ser558, and Ser589. The interval 591–623 (ELEKEKEDTQGFTLGESPESEDDDSGDGMDVAG) is disordered. Residues 608–617 (PESEDDDSGD) are compositionally biased toward acidic residues. The residue at position 707 (Ser707) is a Phosphoserine. Position 832 is a phosphothreonine (Thr832). Ser925 bears the Phosphoserine mark. The tract at residues 925–955 (SPEVSASRRKLDFNSPGGSSPVENSDCSTNS) is disordered. Polar residues predominate over residues 940-955 (PGGSSPVENSDCSTNS). Ser958 is subject to Phosphoserine. Disordered regions lie at residues 977–1001 (VQGD…HGSE) and 1107–1133 (TEVE…QKNL). Residues 984–998 (QRQPQATDLDSSGTH) show a composition bias toward polar residues. Lys1218 bears the N6-acetyllysine mark. 3 disordered regions span residues 1295 to 1372 (TTEN…PSAL), 1467 to 1510 (AEKS…KSRL), and 1543 to 1707 (NSKL…SASE). Composition is skewed to polar residues over residues 1306–1319 (RETT…SEPT), 1328–1344 (EGSS…NPQS), 1487–1505 (NNLS…STNF), 1565–1588 (NKPV…QSFS), and 1594–1605 (TKTQRSQTQTIL). Ser1588 is modified (phosphoserine). Composition is skewed to low complexity over residues 1609–1620 (DTSTPTDCSPDT) and 1637–1671 (APLI…QVSP). Ser1617 carries the post-translational modification Phosphoserine. Thr1642 carries the post-translational modification Phosphothreonine. Phosphoserine is present on residues Ser1692, Ser1697, Ser1699, Ser1701, Ser1712, Ser1838, and Ser1854. The segment at 1809 to 1902 (TGSSSGGDCN…AVSAVSQLPL (94 aa)) is disordered. Polar residues predominate over residues 1825 to 1843 (LGTQQDSSGKRTLSTSTLR). Residues 1889 to 1901 (CSSPAVSAVSQLP) are compositionally biased toward polar residues. Ser1903 is modified (phosphoserine).

It belongs to the ICE1 family. In terms of assembly, component of the little elongation complex (LEC), at least composed of ELL (ELL, ELL2 or ELL3), ZC3H8, ICE1 and ICE2. Interacts (via N-terminus domain) with ELL. Interacts (via C-terminus domain) with ICE2 and ZC3H8.

Its subcellular location is the nucleus. The protein localises to the cajal body. Its function is as follows. Component of the little elongation complex (LEC), a complex required to regulate small nuclear RNA (snRNA) gene transcription by RNA polymerase II and III. Specifically acts as a scaffold protein that promotes the LEC complex formation and recruitment and RNA polymerase II occupancy at snRNA genes in subnuclear bodies. This is Little elongation complex subunit 1 (ICE1) from Homo sapiens (Human).